A 365-amino-acid chain; its full sequence is Serpentine receptor class epsilon-38 (365 aa).

Helical transmembrane passes span 26–46, 65–85, 124–144, 168–188, 196–216, 256–276, and 285–305; these read GMYL…GVII, IMTA…LLII, ALVI…FGIL, IPVF…YFVL, LGTS…LAVW, LVIV…CLVI, and IFIH…CSTL.

This sequence belongs to the nematode receptor-like protein sre family.

The protein resides in the membrane. This is Serpentine receptor class epsilon-38 (sre-38) from Caenorhabditis elegans.